Consider the following 456-residue polypeptide: Enolase (456 aa).

Q164 serves as a coordination point for (2R)-2-phosphoglycerate. The Proton donor role is filled by E207. Mg(2+) contacts are provided by D244, E287, and D314. Positions 339, 368, 369, and 390 each coordinate (2R)-2-phosphoglycerate. K339 acts as the Proton acceptor in catalysis.

Belongs to the enolase family. In terms of assembly, component of the RNA degradosome, a multiprotein complex involved in RNA processing and mRNA degradation. The cofactor is Mg(2+).

It is found in the cytoplasm. The protein resides in the secreted. Its subcellular location is the cell surface. The catalysed reaction is (2R)-2-phosphoglycerate = phosphoenolpyruvate + H2O. The protein operates within carbohydrate degradation; glycolysis; pyruvate from D-glyceraldehyde 3-phosphate: step 4/5. In terms of biological role, catalyzes the reversible conversion of 2-phosphoglycerate (2-PG) into phosphoenolpyruvate (PEP). It is essential for the degradation of carbohydrates via glycolysis. The protein is Enolase of Francisella tularensis subsp. tularensis (strain FSC 198).